The chain runs to 355 residues: UDP-N-acetylglucosamine--N-acetylmuramyl-(pentapeptide) pyrophosphoryl-undecaprenol N-acetylglucosamine transferase (355 aa).

UDP-N-acetyl-alpha-D-glucosamine contacts are provided by residues 11-13 (TGG), N120, R161, S188, and Q280.

Belongs to the glycosyltransferase 28 family. MurG subfamily.

The protein localises to the cell inner membrane. The catalysed reaction is di-trans,octa-cis-undecaprenyl diphospho-N-acetyl-alpha-D-muramoyl-L-alanyl-D-glutamyl-meso-2,6-diaminopimeloyl-D-alanyl-D-alanine + UDP-N-acetyl-alpha-D-glucosamine = di-trans,octa-cis-undecaprenyl diphospho-[N-acetyl-alpha-D-glucosaminyl-(1-&gt;4)]-N-acetyl-alpha-D-muramoyl-L-alanyl-D-glutamyl-meso-2,6-diaminopimeloyl-D-alanyl-D-alanine + UDP + H(+). The protein operates within cell wall biogenesis; peptidoglycan biosynthesis. Its function is as follows. Cell wall formation. Catalyzes the transfer of a GlcNAc subunit on undecaprenyl-pyrophosphoryl-MurNAc-pentapeptide (lipid intermediate I) to form undecaprenyl-pyrophosphoryl-MurNAc-(pentapeptide)GlcNAc (lipid intermediate II). In Prochlorococcus marinus (strain MIT 9211), this protein is UDP-N-acetylglucosamine--N-acetylmuramyl-(pentapeptide) pyrophosphoryl-undecaprenol N-acetylglucosamine transferase.